Here is a 105-residue protein sequence, read N- to C-terminus: MEVRFLLFLLLLVLVINPSLVVNMVFGYMFGLLLRNNYSRLKAMIRSNQTEEEEERHEAVDVSNPFEDVDIDVMQHLKTLGLDSKVDEEDVEYFRRFWQSMLRNK.

The helical transmembrane segment at 5–25 threads the bilayer; sequence FLLFLLLLVLVINPSLVVNMV.

This sequence belongs to the nanovirus U4 protein family.

The protein resides in the membrane. The polypeptide is Protein U4 (DNA-U4) (Faba bean necrotic yellows virus (isolate Egyptian EV1-93) (FBNYV)).